A 475-amino-acid chain; its full sequence is uncharacterized protein (475 aa).

The stretch at 185 to 244 (EISVSAISEQLASLMERVDKLEKMNAALEEENKQLKKEREATIKSVKKEAKKIKQEKPQI) forms a coiled coil.

This is an uncharacterized protein from Nora virus.